The chain runs to 293 residues: Protease HtpX (293 aa).

2 helical membrane-spanning segments follow: residues Phe-2–Leu-22 and Leu-38–Phe-58. His-145 is a binding site for Zn(2+). Residue Glu-146 is part of the active site. His-149 contributes to the Zn(2+) binding site. A run of 2 helical transmembrane segments spans residues Val-156–Ile-176 and Ile-193–Ile-213. Glu-222 provides a ligand contact to Zn(2+).

The protein belongs to the peptidase M48B family. Zn(2+) serves as cofactor.

It is found in the cell inner membrane. The polypeptide is Protease HtpX (Hahella chejuensis (strain KCTC 2396)).